Here is a 99-residue protein sequence, read N- to C-terminus: NADH-ubiquinone oxidoreductase chain 2 (99 aa).

2 helical membrane-spanning segments follow: residues 22–42 (FLTFIGILLSGITAFYYIQII) and 65–85 (VMISITTLLLILFFADNSIFI).

This sequence belongs to the complex I subunit 2 family.

The protein localises to the mitochondrion inner membrane. It catalyses the reaction a ubiquinone + NADH + 5 H(+)(in) = a ubiquinol + NAD(+) + 4 H(+)(out). Functionally, core subunit of the mitochondrial membrane respiratory chain NADH dehydrogenase (Complex I) that is believed to belong to the minimal assembly required for catalysis. Complex I functions in the transfer of electrons from NADH to the respiratory chain. The immediate electron acceptor for the enzyme is believed to be ubiquinone. In Cyanidium caldarium (Red alga), this protein is NADH-ubiquinone oxidoreductase chain 2 (ND2).